The following is a 395-amino-acid chain: GTPase Obg (395 aa).

The Obg domain occupies 1-159 (MQFVDEASII…RNLRFEMKVM (159 aa)). The tract at residues 128 to 147 (IHFKSSTNRAPRKTTPGTEG) is disordered. An OBG-type G domain is found at 160-333 (ADVGLLGVPN…LVQAAHRWLT (174 aa)). GTP-binding positions include 166-173 (GVPNAGKS), 191-195 (FTTLV), 213-216 (DVPG), 283-286 (NKLD), and 314-316 (SAI). Mg(2+) contacts are provided by S173 and T193. The segment covering 340 to 368 (AEDETAFEHEREMRRRMEDEAVARAEARM) has biased composition (basic and acidic residues). A disordered region spans residues 340–395 (AEDETAFEHEREMRRRMEDEAVARAEARMSRKRKPAEDDDDDFDEDDYDVEVEYAP). The segment covering 376-395 (EDDDDDFDEDDYDVEVEYAP) has biased composition (acidic residues).

This sequence belongs to the TRAFAC class OBG-HflX-like GTPase superfamily. OBG GTPase family. As to quaternary structure, monomer. Mg(2+) serves as cofactor.

The protein localises to the cytoplasm. In terms of biological role, an essential GTPase which binds GTP, GDP and possibly (p)ppGpp with moderate affinity, with high nucleotide exchange rates and a fairly low GTP hydrolysis rate. Plays a role in control of the cell cycle, stress response, ribosome biogenesis and in those bacteria that undergo differentiation, in morphogenesis control. This is GTPase Obg from Chromohalobacter salexigens (strain ATCC BAA-138 / DSM 3043 / CIP 106854 / NCIMB 13768 / 1H11).